We begin with the raw amino-acid sequence, 245 residues long: Small ribosomal subunit protein uS3 (245 aa).

Residues 39 to 107 (IRKAIREKLK…EVRVNLVEIR (69 aa)) form the KH type-2 domain. The segment at 216–245 (DKRLETSGQSRARANTNQRGPASGAQAAGA) is disordered. Residues 221–235 (TSGQSRARANTNQRG) are compositionally biased toward polar residues.

This sequence belongs to the universal ribosomal protein uS3 family. In terms of assembly, part of the 30S ribosomal subunit. Forms a tight complex with proteins S10 and S14.

Its function is as follows. Binds the lower part of the 30S subunit head. Binds mRNA in the 70S ribosome, positioning it for translation. This is Small ribosomal subunit protein uS3 from Hyphomonas neptunium (strain ATCC 15444).